The sequence spans 183 residues: Integrase-like protein y4lS (183 aa).

The Resolvase/invertase-type recombinase catalytic domain maps to 2 to 136 (ARIGYARTFT…EGIAAARKRG (135 aa)).

It belongs to the site-specific recombinase resolvase family.

In Sinorhizobium fredii (strain NBRC 101917 / NGR234), this protein is Integrase-like protein y4lS.